The chain runs to 120 residues: uncharacterized protein (120 aa).

Residues 13–119 (VIDKDICKGM…YGLWMAANEE (107 aa)) enclose the PRD domain.

This is an uncharacterized protein from Escherichia coli (strain K12).